A 506-amino-acid polypeptide reads, in one-letter code: Ribose import ATP-binding protein RbsA 2 (506 aa).

ABC transporter domains follow at residues 5-241 (LRLS…VGRR) and 251-498 (VRAA…TAGT). Residue 37-44 (GENGAGKS) participates in ATP binding.

This sequence belongs to the ABC transporter superfamily. Ribose importer (TC 3.A.1.2.1) family. In terms of assembly, the complex is composed of an ATP-binding protein (RbsA), two transmembrane proteins (RbsC) and a solute-binding protein (RbsB).

The protein resides in the cell inner membrane. The enzyme catalyses D-ribose(out) + ATP + H2O = D-ribose(in) + ADP + phosphate + H(+). In terms of biological role, part of the ABC transporter complex RbsABC involved in ribose import. Responsible for energy coupling to the transport system. The sequence is that of Ribose import ATP-binding protein RbsA 2 from Burkholderia ambifaria (strain ATCC BAA-244 / DSM 16087 / CCUG 44356 / LMG 19182 / AMMD) (Burkholderia cepacia (strain AMMD)).